A 406-amino-acid polypeptide reads, in one-letter code: Probable tRNA sulfurtransferase (406 aa).

Positions 60–166 (EPVMERLKQV…LNGIYLTSAK (107 aa)) constitute a THUMP domain. ATP contacts are provided by residues 184-185 (ML), 209-210 (HF), Arg266, Gly288, and Gln297.

This sequence belongs to the ThiI family.

The protein resides in the cytoplasm. It carries out the reaction [ThiI sulfur-carrier protein]-S-sulfanyl-L-cysteine + a uridine in tRNA + 2 reduced [2Fe-2S]-[ferredoxin] + ATP + H(+) = [ThiI sulfur-carrier protein]-L-cysteine + a 4-thiouridine in tRNA + 2 oxidized [2Fe-2S]-[ferredoxin] + AMP + diphosphate. The enzyme catalyses [ThiS sulfur-carrier protein]-C-terminal Gly-Gly-AMP + S-sulfanyl-L-cysteinyl-[cysteine desulfurase] + AH2 = [ThiS sulfur-carrier protein]-C-terminal-Gly-aminoethanethioate + L-cysteinyl-[cysteine desulfurase] + A + AMP + 2 H(+). It participates in cofactor biosynthesis; thiamine diphosphate biosynthesis. Functionally, catalyzes the ATP-dependent transfer of a sulfur to tRNA to produce 4-thiouridine in position 8 of tRNAs, which functions as a near-UV photosensor. Also catalyzes the transfer of sulfur to the sulfur carrier protein ThiS, forming ThiS-thiocarboxylate. This is a step in the synthesis of thiazole, in the thiamine biosynthesis pathway. The sulfur is donated as persulfide by IscS. The chain is Probable tRNA sulfurtransferase from Limosilactobacillus fermentum (strain NBRC 3956 / LMG 18251) (Lactobacillus fermentum).